The chain runs to 27 residues: Larval-specific very high density lipoprotein (27 aa).

As to quaternary structure, homodimer. In terms of tissue distribution, hemolymph.

Its subcellular location is the secreted. It localises to the extracellular space. Its function is as follows. Unknown (it might play a role in lipid transport and/or storage protein metabolism during metamorphosis). This is Larval-specific very high density lipoprotein from Apis mellifera (Honeybee).